A 446-amino-acid chain; its full sequence is MSDKRRYFGTDGVRGKVGQYPITPDFVLKLGWAAGRVLAKQGTRKVIIGKDTRISGYMLESALEAGLAAAGLKATFTGPMPTPAVAYLTQTFRAEAGIVISASHNPYYDNGIKFFSYEGAKLPDDIELAIEAELDKDIECVESAELGKASRMVDAAGRYIEFCKSTFPSKLSLSGLKLVVDCANGATYHIAPNVFRELGAEVIAMGVEPNGLNINDQVGATDVRALQKRVVEEHAHLGLAFDGDGDRIIMVDHLGNKVDGDQIAYIIARDALRRGELKGGVVGTLMTNLGMENGLKQLGIPFVRAAVGDRYVMEKLLEKGWKIGAENSGHVILLDKVTTGDAIVAGLQVLASVVGSEMTLHELAKGMTLYPQVLENVRFAGDNNPLEADAVKAAVSEVEAELGSKGRVLLRKSGTEPLIRVMVEGEDETLVKQSALKIAQAVKDNC.

The Phosphoserine intermediate role is filled by Ser103. Positions 103, 242, 244, and 246 each coordinate Mg(2+). Phosphoserine is present on Ser103.

It belongs to the phosphohexose mutase family. Requires Mg(2+) as cofactor. In terms of processing, activated by phosphorylation.

It catalyses the reaction alpha-D-glucosamine 1-phosphate = D-glucosamine 6-phosphate. Functionally, catalyzes the conversion of glucosamine-6-phosphate to glucosamine-1-phosphate. The polypeptide is Phosphoglucosamine mutase (Vibrio cholerae serotype O1 (strain ATCC 39541 / Classical Ogawa 395 / O395)).